Here is a 424-residue protein sequence, read N- to C-terminus: Serine--tRNA ligase (424 aa).

232-234 provides a ligand contact to L-serine; sequence TAE. Position 263–265 (263–265) interacts with ATP; that stretch reads RKE. Glu286 is a binding site for L-serine. 350-353 contacts ATP; sequence EISS. Residue Ser386 participates in L-serine binding.

It belongs to the class-II aminoacyl-tRNA synthetase family. Type-1 seryl-tRNA synthetase subfamily. In terms of assembly, homodimer. The tRNA molecule binds across the dimer.

Its subcellular location is the cytoplasm. The catalysed reaction is tRNA(Ser) + L-serine + ATP = L-seryl-tRNA(Ser) + AMP + diphosphate + H(+). It catalyses the reaction tRNA(Sec) + L-serine + ATP = L-seryl-tRNA(Sec) + AMP + diphosphate + H(+). Its pathway is aminoacyl-tRNA biosynthesis; selenocysteinyl-tRNA(Sec) biosynthesis; L-seryl-tRNA(Sec) from L-serine and tRNA(Sec): step 1/1. Its function is as follows. Catalyzes the attachment of serine to tRNA(Ser). Is also able to aminoacylate tRNA(Sec) with serine, to form the misacylated tRNA L-seryl-tRNA(Sec), which will be further converted into selenocysteinyl-tRNA(Sec). This Thermodesulfovibrio yellowstonii (strain ATCC 51303 / DSM 11347 / YP87) protein is Serine--tRNA ligase.